The primary structure comprises 198 residues: Recombination protein RecR (198 aa).

The C4-type zinc finger occupies 57–72; sequence CEKCNTFTEAQICEVC. Positions 80 to 175 constitute a Toprim domain; that stretch reads TLLCVVETPA…AVTRLARGVP (96 aa).

It belongs to the RecR family.

In terms of biological role, may play a role in DNA repair. It seems to be involved in an RecBC-independent recombinational process of DNA repair. It may act with RecF and RecO. The chain is Recombination protein RecR from Paraburkholderia xenovorans (strain LB400).